The following is a 109-amino-acid chain: Latartoxin-2a (109 aa).

The N-terminal stretch at 1 to 19 is a signal peptide; that stretch reads MKVLVIIALCLVAFQSALS. A propeptide spans 20-37 (removed in mature form); the sequence is KKIENFESYIEDLKSEAR. The short motif at 34 to 37 is the Processing quadruplet motif element; sequence SEAR. 5 cysteine pairs are disulfide-bonded: C39/C56, C46/C67, C55/C81, C69/C79, and C72/C93. The residue at position 108 (V108) is a Valine amide.

It belongs to the neurotoxin 19 (CSTX) family. 11 (latartoxin) subfamily. In terms of processing, contains 5 disulfide bonds. Post-translationally, cleavage of the propeptide depends on the processing quadruplet motif (XXXR, with at least one of X being E). As to expression, expressed by the venom gland.

The protein localises to the secreted. Functionally, insect toxin. Causes paralysis in larvae of C.vicina by depolarizing membranes at the neuromuscular junction. This Lachesana tarabaevi (Spider) protein is Latartoxin-2a.